Here is a 106-residue protein sequence, read N- to C-terminus: Pyrimidine/purine nucleoside phosphorylase (106 aa).

The protein belongs to the nucleoside phosphorylase PpnP family.

The enzyme catalyses a purine D-ribonucleoside + phosphate = a purine nucleobase + alpha-D-ribose 1-phosphate. It carries out the reaction adenosine + phosphate = alpha-D-ribose 1-phosphate + adenine. The catalysed reaction is cytidine + phosphate = cytosine + alpha-D-ribose 1-phosphate. It catalyses the reaction guanosine + phosphate = alpha-D-ribose 1-phosphate + guanine. The enzyme catalyses inosine + phosphate = alpha-D-ribose 1-phosphate + hypoxanthine. It carries out the reaction thymidine + phosphate = 2-deoxy-alpha-D-ribose 1-phosphate + thymine. The catalysed reaction is uridine + phosphate = alpha-D-ribose 1-phosphate + uracil. It catalyses the reaction xanthosine + phosphate = alpha-D-ribose 1-phosphate + xanthine. Its function is as follows. Catalyzes the phosphorolysis of diverse nucleosides, yielding D-ribose 1-phosphate and the respective free bases. Can use uridine, adenosine, guanosine, cytidine, thymidine, inosine and xanthosine as substrates. Also catalyzes the reverse reactions. The sequence is that of Pyrimidine/purine nucleoside phosphorylase from Burkholderia multivorans (strain ATCC 17616 / 249).